We begin with the raw amino-acid sequence, 488 residues long: Endoglucanase A (488 aa).

Residues His-59, 63-64, Tyr-90, and His-125 each bind substrate; that span reads WY. The active-site Proton donor is Glu-163. Tyr-226 is a substrate binding site. The active-site Nucleophile is the Glu-252. Substrate contacts are provided by residues 258 to 259, Trp-286, and 291 to 293; these read AT and KDE. Disordered regions lie at residues 326-362 and 388-451; these read ESAS…AWDP and EPGA…WDPT. Pro residues-rich tracts occupy residues 332-353 and 405-416; these read PSDP…PPSD and PSEPSDPPPPSE. Over residues 417–433 the composition is skewed to acidic residues; it reads PEPDPGEPDPGEPDPGE.

It belongs to the glycosyl hydrolase 5 (cellulase A) family.

The enzyme catalyses Endohydrolysis of (1-&gt;4)-beta-D-glucosidic linkages in cellulose, lichenin and cereal beta-D-glucans.. This Evansella cellulosilytica (strain ATCC 21833 / DSM 2522 / FERM P-1141 / JCM 9156 / N-4) (Bacillus cellulosilyticus) protein is Endoglucanase A (celA).